The chain runs to 118 residues: Large ribosomal subunit protein uL22 (118 aa).

Belongs to the universal ribosomal protein uL22 family. As to quaternary structure, part of the 50S ribosomal subunit.

In terms of biological role, this protein binds specifically to 23S rRNA; its binding is stimulated by other ribosomal proteins, e.g. L4, L17, and L20. It is important during the early stages of 50S assembly. It makes multiple contacts with different domains of the 23S rRNA in the assembled 50S subunit and ribosome. Functionally, the globular domain of the protein is located near the polypeptide exit tunnel on the outside of the subunit, while an extended beta-hairpin is found that lines the wall of the exit tunnel in the center of the 70S ribosome. The sequence is that of Large ribosomal subunit protein uL22 from Listeria innocua serovar 6a (strain ATCC BAA-680 / CLIP 11262).